Consider the following 422-residue polypeptide: Phospho-N-acetylmuramoyl-pentapeptide-transferase (422 aa).

The next 9 membrane-spanning stretches (helical) occupy residues 28-48 (LMAI…FINL), 71-91 (VGVP…PCLL), 95-115 (LHNI…TLGF), 136-156 (IIGQ…SPSV), 208-228 (AQAV…TAVS), 239-259 (GMAA…AYVS), 279-299 (LVIF…YNAF), 313-333 (IGGI…IPIL), and 399-419 (KITV…IITL).

The protein belongs to the glycosyltransferase 4 family. MraY subfamily. The cofactor is Mg(2+).

Its subcellular location is the cell inner membrane. It catalyses the reaction UDP-N-acetyl-alpha-D-muramoyl-L-alanyl-gamma-D-glutamyl-meso-2,6-diaminopimeloyl-D-alanyl-D-alanine + di-trans,octa-cis-undecaprenyl phosphate = di-trans,octa-cis-undecaprenyl diphospho-N-acetyl-alpha-D-muramoyl-L-alanyl-D-glutamyl-meso-2,6-diaminopimeloyl-D-alanyl-D-alanine + UMP. The protein operates within cell wall biogenesis; peptidoglycan biosynthesis. Its function is as follows. Catalyzes the initial step of the lipid cycle reactions in the biosynthesis of the cell wall peptidoglycan: transfers peptidoglycan precursor phospho-MurNAc-pentapeptide from UDP-MurNAc-pentapeptide onto the lipid carrier undecaprenyl phosphate, yielding undecaprenyl-pyrophosphoryl-MurNAc-pentapeptide, known as lipid I. The sequence is that of Phospho-N-acetylmuramoyl-pentapeptide-transferase from Phocaeicola vulgatus (strain ATCC 8482 / DSM 1447 / JCM 5826 / CCUG 4940 / NBRC 14291 / NCTC 11154) (Bacteroides vulgatus).